The chain runs to 1049 residues: Multiple C2 domain and transmembrane region protein 16 (1049 aa).

One can recognise a C2 1 domain in the interval 1-112; it reads MATTRKLVVE…VGQGEEALIY (112 aa). The interval 136 to 249 is disordered; sequence DEKPPPLKPT…PPQNQPDGED (114 aa). Composition is skewed to basic and acidic residues over residues 153–170 and 226–238; these read VEEK…ESKP and ESDK…KPVE. 3 consecutive C2 domains span residues 302–426, 460–582, and 617–745; these read TSEI…PQWY, TAGN…SRWL, and VCSD…RNTY. Serine 338, aspartate 390, threonine 393, and serine 398 together coordinate Ca(2+). Transmembrane regions (helical) follow at residues 883–903 and 989–1009; these read VMLI…LFVI and ATGI…LVPT.

It belongs to the MCTP family. The cofactor is Ca(2+). Expressed in the vascular tissues of roots, cotyledons and rosette leaves. Accumulates in roots meristems and shoot apical meristems (SAMs). Observed in flowers.

The protein resides in the endoplasmic reticulum membrane. In terms of biological role, may function as a signaling molecule by regulating the trafficking of other regulators. The protein is Multiple C2 domain and transmembrane region protein 16 of Arabidopsis thaliana (Mouse-ear cress).